Consider the following 262-residue polypeptide: Ribosomal RNA small subunit methyltransferase A (262 aa).

S-adenosyl-L-methionine is bound by residues asparagine 13, leucine 15, glycine 40, glutamate 61, aspartate 85, and asparagine 105.

It belongs to the class I-like SAM-binding methyltransferase superfamily. rRNA adenine N(6)-methyltransferase family. RsmA subfamily.

The protein resides in the cytoplasm. The enzyme catalyses adenosine(1518)/adenosine(1519) in 16S rRNA + 4 S-adenosyl-L-methionine = N(6)-dimethyladenosine(1518)/N(6)-dimethyladenosine(1519) in 16S rRNA + 4 S-adenosyl-L-homocysteine + 4 H(+). Its function is as follows. Specifically dimethylates two adjacent adenosines (A1518 and A1519) in the loop of a conserved hairpin near the 3'-end of 16S rRNA in the 30S particle. May play a critical role in biogenesis of 30S subunits. In Laribacter hongkongensis (strain HLHK9), this protein is Ribosomal RNA small subunit methyltransferase A.